Here is a 666-residue protein sequence, read N- to C-terminus: Non-receptor tyrosine-protein kinase TNK1 (666 aa).

Serine 96 bears the Phosphoserine mark. The Protein kinase domain occupies 116-383; that stretch reads VRRGELLGSG…LEGLLQEAWL (268 aa). ATP is bound by residues 122–130 and lysine 148; that span reads LGSGCFGVV. Residue aspartate 245 is the Proton acceptor of the active site. Serine 255 bears the Phosphoserine mark. Residues 381-441 enclose the SH3 domain; sequence AWLSEGRCVR…PASAVTLADL (61 aa). Positions 442–589 are disordered; the sequence is GGSPVTHPAH…VPSGGPLSDP (148 aa). The segment covering 457–473 has biased composition (basic and acidic residues); it reads HGEKCRGGTDGDREKAT. Serine 498 carries the post-translational modification Phosphoserine. At threonine 510 the chain carries Phosphothreonine. Serine 515 bears the Phosphoserine mark. Over residues 531–544 the composition is skewed to pro residues; sequence DLPPRPPDLPPRPP. A Phosphoserine modification is found at serine 582.

It belongs to the protein kinase superfamily. Tyr protein kinase family. As to quaternary structure, interacts with the SH3 domain of PLCG1 via its Pro-rich domain. In terms of processing, autophosphorylated on tyrosine residues. In terms of tissue distribution, expressed in whole embryo and all adult tissues examined including liver, kidney, heart, brain, skeletal muscle and intestine. Also detected in various myeloid- and lymphoid-derived cell lines.

The protein resides in the membrane. It is found in the cytoplasm. It catalyses the reaction L-tyrosyl-[protein] + ATP = O-phospho-L-tyrosyl-[protein] + ADP + H(+). Its function is as follows. May function in signaling pathways utilized broadly during fetal development and more selectively in adult tissues and in cells of the lymphohematopoietic system. Could specifically be involved in phospholipid signal transduction. Involved in negative regulation of cell growth. Has tumor suppressor properties. Plays a negative regulatory role in the Ras-MAPK pathway. The protein is Non-receptor tyrosine-protein kinase TNK1 of Mus musculus (Mouse).